Here is a 154-residue protein sequence, read N- to C-terminus: Large ribosomal subunit protein uL30 (154 aa).

Residues 114-139 (PTLRLHPPRGGHDGIKHPTKEGGQLG) are disordered. The segment covering 123–133 (GGHDGIKHPTK) has biased composition (basic and acidic residues).

Belongs to the universal ribosomal protein uL30 family. In terms of assembly, part of the 50S ribosomal subunit.

This Natronomonas pharaonis (strain ATCC 35678 / DSM 2160 / CIP 103997 / JCM 8858 / NBRC 14720 / NCIMB 2260 / Gabara) (Halobacterium pharaonis) protein is Large ribosomal subunit protein uL30.